The sequence spans 50 residues: Bacteriocin BacSp222 (50 aa).

Methionine 1 carries the post-translational modification N-formylmethionine.

The protein localises to the secreted. Its function is as follows. Has bacteriolytic activity against Gram-positive bacteria B.subtilis, L.lactis and M.luteus and several species from genus Staphylococcus including methicillin-resistant S.aureus, with MIC values ranging from 0.11 uM to 7.8 uM. Has no activity against Gram-negative bacteria or fungi. In vitro, has a dose-dependent cytolytic effect on eukaryotic cells. This chain is Bacteriocin BacSp222, found in Staphylococcus pseudintermedius.